A 364-amino-acid polypeptide reads, in one-letter code: MTRPIVADISAAALRHNVAVVREHAPRARIMAAVKANAYGHGVTLCAPVLAEAGVDAFAVASLEEAEALHALGLERPICLLGGPFDADEVSVAAERAYLLVIHEQRQLQWLETRAADAALRLFIKVDTGMHRLGFAPERLPALFAALQRHPRWEVLGLMSHLARSDTPDDPFNRQQAGVFADAIAHVGHVTAGQHSLANSGGVLALPFTHQYWVRPGLMLYGLSPFAGRRGSEIGLQPVLSWRSAVVAIRELGPGDWLGYGAAWQAPARCRVGVVAAGYGDGYPRHLGCGAPVTVAGQTTRTLARVSMDMLFVDLTAVEADIGAPVVLMGAGGPPLESLAAELGTISYEMSCRMQMRVPRRLVS.

Lysine 35 acts as the Proton acceptor; specific for D-alanine in catalysis. Lysine 35 is modified (N6-(pyridoxal phosphate)lysine). Arginine 132 contributes to the substrate binding site. The active-site Proton acceptor; specific for L-alanine is the tyrosine 260. Substrate is bound at residue methionine 308.

This sequence belongs to the alanine racemase family. Requires pyridoxal 5'-phosphate as cofactor.

It carries out the reaction L-alanine = D-alanine. Its pathway is amino-acid biosynthesis; D-alanine biosynthesis; D-alanine from L-alanine: step 1/1. Its function is as follows. Catalyzes the interconversion of L-alanine and D-alanine. May also act on other amino acids. The protein is Alanine racemase (alr) of Acidithiobacillus ferrooxidans (strain ATCC 23270 / DSM 14882 / CIP 104768 / NCIMB 8455) (Ferrobacillus ferrooxidans (strain ATCC 23270)).